Reading from the N-terminus, the 408-residue chain is uncharacterized protein (408 aa).

Positions 376-386 are enriched in polar residues; that stretch reads NELNDPNSVYN. The disordered stretch occupies residues 376-408; it reads NELNDPNSVYNSPEFDHQGDQKKLTEENGCVVQ. Residues 389-401 are compositionally biased toward basic and acidic residues; it reads EFDHQGDQKKLTE.

This is an uncharacterized protein from Acanthamoeba polyphaga (Amoeba).